Reading from the N-terminus, the 116-residue chain is Ribosome-binding factor A (116 aa).

Belongs to the RbfA family. As to quaternary structure, monomer. Binds 30S ribosomal subunits, but not 50S ribosomal subunits or 70S ribosomes.

The protein resides in the cytoplasm. Its function is as follows. One of several proteins that assist in the late maturation steps of the functional core of the 30S ribosomal subunit. Associates with free 30S ribosomal subunits (but not with 30S subunits that are part of 70S ribosomes or polysomes). Required for efficient processing of 16S rRNA. May interact with the 5'-terminal helix region of 16S rRNA. In Levilactobacillus brevis (strain ATCC 367 / BCRC 12310 / CIP 105137 / JCM 1170 / LMG 11437 / NCIMB 947 / NCTC 947) (Lactobacillus brevis), this protein is Ribosome-binding factor A.